A 208-amino-acid polypeptide reads, in one-letter code: ATP phosphoribosyltransferase (208 aa).

This sequence belongs to the ATP phosphoribosyltransferase family. Short subfamily. In terms of assembly, heteromultimer composed of HisG and HisZ subunits.

The protein resides in the cytoplasm. The enzyme catalyses 1-(5-phospho-beta-D-ribosyl)-ATP + diphosphate = 5-phospho-alpha-D-ribose 1-diphosphate + ATP. The protein operates within amino-acid biosynthesis; L-histidine biosynthesis; L-histidine from 5-phospho-alpha-D-ribose 1-diphosphate: step 1/9. In terms of biological role, catalyzes the condensation of ATP and 5-phosphoribose 1-diphosphate to form N'-(5'-phosphoribosyl)-ATP (PR-ATP). Has a crucial role in the pathway because the rate of histidine biosynthesis seems to be controlled primarily by regulation of HisG enzymatic activity. The sequence is that of ATP phosphoribosyltransferase from Thermotoga petrophila (strain ATCC BAA-488 / DSM 13995 / JCM 10881 / RKU-1).